A 242-amino-acid polypeptide reads, in one-letter code: uncharacterized protein (242 aa).

Positions 1–11 are enriched in low complexity; sequence MNFEAASAPSQ. The segment at 1-45 is disordered; that stretch reads MNFEAASAPSQQPSPTPAPKTEEPKENGGSEQQADQPENSKKDDV.

It to U.parvum UU171.

This is an uncharacterized protein from Ureaplasma parvum serovar 3 (strain ATCC 700970).